The chain runs to 75 residues: Brevinin-2SN2 (75 aa).

An N-terminal signal peptide occupies residues 1–22; sequence MFTMKKSLLFLFFLGTISLSFC. The propeptide at 23 to 40 is removed in mature form; sequence EEERGADEDDGGEMTEEE. Cys69 and Cys75 are joined by a disulfide.

Belongs to the frog skin active peptide (FSAP) family. Brevinin subfamily. As to expression, expressed by the skin glands.

The protein resides in the secreted. In terms of biological role, antimicrobial peptide. Active against some Gram-negative and a variety of Gram-positive bacterial strains. Active against fungus C.glabrata 090902 but not against C.albicans ATCC 10231. Shows hemolytic activity against human erythrocytes. In Sylvirana spinulosa (Fine-spined frog), this protein is Brevinin-2SN2.